We begin with the raw amino-acid sequence, 28 residues long: Palustrin-1a (28 aa).

A disulfide bridge connects residues C22 and C28.

Expressed by the skin glands.

It is found in the secreted. Its function is as follows. Antimicrobial activity against Gram-negative bacterium E.coli. This Lithobates palustris (Pickerel frog) protein is Palustrin-1a.